The chain runs to 1043 residues: Ack-related non-receptor tyrosine kinase (1043 aa).

The region spanning 113–379 (ITLCKELGQG…SDIVAKFPER (267 aa)) is the Protein kinase domain. ATP-binding positions include 119–127 (LGQGEFGSV) and lysine 146. Aspartate 241 (proton acceptor) is an active-site residue. The 66-residue stretch at 379–444 (RRAQSVRAVV…RPTDTVAHLG (66 aa)) folds into the SH3 domain. Positions 443–481 (LGSEPPCSNGTIENGFSEKEKGGKKNKKAEKESERERKK) are disordered. Residues 458-481 (FSEKEKGGKKNKKAEKESERERKK) show a composition bias toward basic and acidic residues. The CRIB domain maps to 484-498 (ISEPVGDVRHTCHVG). 4 disordered regions span residues 514 to 644 (MCPT…SAAN), 790 to 842 (KINE…GWSS), 859 to 898 (KQAS…LSVR), and 932 to 993 (LIDG…RQFP). Over residues 516–543 (PTSSSPSTSRGSQASPAPSHTSSSTTSS) the composition is skewed to low complexity. The segment covering 610 to 624 (GNQHSVQVHDQFSSL) has biased composition (polar residues). The segment covering 630–644 (SLTPTAPPLTASAAN) has biased composition (low complexity). The stretch at 785 to 812 (EQEVRKINEKSAREHRKTEDLLREERQK) forms a coiled coil. Residues 790–818 (KINEKSAREHRKTEDLLREERQKEQKPGE) show a composition bias toward basic and acidic residues. Positions 825–842 (PAESLYSTRTPQQEGWSS) are enriched in polar residues. Positions 870–884 (PTSSRLSTLDRSSIS) are enriched in low complexity.

Belongs to the protein kinase superfamily. Tyr protein kinase family. It depends on Mg(2+) as a cofactor.

It carries out the reaction L-tyrosyl-[protein] + ATP = O-phospho-L-tyrosyl-[protein] + ADP + H(+). The catalysed reaction is L-seryl-[protein] + ATP = O-phospho-L-seryl-[protein] + ADP + H(+). It catalyses the reaction L-threonyl-[protein] + ATP = O-phospho-L-threonyl-[protein] + ADP + H(+). In terms of biological role, probable tyrosine protein kinase which plays a role in vulva development, probably by acting as a negative regulator of the let-23/EGFR and let-60/ras pathway. Involved in the negative regulation of germline development. This is Ack-related non-receptor tyrosine kinase from Caenorhabditis elegans.